Here is a 235-residue protein sequence, read N- to C-terminus: Probable tetraspanin tspA (235 aa).

The Cytoplasmic segment spans residues 1–18; sequence MVDTSNLLPQTPRLLKVP. The chain crosses the membrane as a helical span at residues 19-39; that stretch reads LIILNIILWILGLVLVIVGGI. Topologically, residues 40–68 are extracellular; it reads CVSFLSNFKDFTKASDAKSALSNLTTSIP. N-linked (GlcNAc...) asparagine glycosylation is present at Asn-62. Residues 69–89 form a helical membrane-spanning segment; it reads AGVLVIGILFVIFTVVGCFVA. The Cytoplasmic portion of the chain corresponds to 90–93; it reads YKEK. A helical membrane pass occupies residues 94–114; that stretch reads LVGLVIYCAVMLILLVILIGV. At 115 to 200 the chain is on the extracellular side; sequence GGKAITLHND…FSSKIYAVGA (86 aa). N-linked (GlcNAc...) asparagine glycosylation is found at Asn-139, Asn-143, and Asn-160. A helical transmembrane segment spans residues 201 to 221; sequence AGLAIGIIELVAILFSLFLII. Residues 222–235 are Cytoplasmic-facing; that stretch reads RICRSPRTRSYDQY.

This sequence belongs to the tetraspanin (TM4SF) family.

Its subcellular location is the membrane. This Dictyostelium discoideum (Social amoeba) protein is Probable tetraspanin tspA (tspA).